A 219-amino-acid polypeptide reads, in one-letter code: MAPFGRLYSFMPNGRVFKILAAATLNGLEIEITPYQHMVDNKTPEFRAKFPAGKVPAFEGADGLLLPESDAIAQYLAQSGPYSEQLLGRDAATSAKIRQWISFFDGEVYPHMLDLVIWRVGIAPFDQSTETKALARLEFALDVLEKHLDGRKWLVGDELTLADLTGASSLLWAFMHIIDASERKRFPSVVAWYLRTIETEEVKEVFGPPNLIDVKRVHE.

The GST N-terminal domain occupies 3–84; the sequence is PFGRLYSFMP…YLAQSGPYSE (82 aa). The GST C-terminal domain maps to 90–219; the sequence is DAATSAKIRQ…NLIDVKRVHE (130 aa).

The protein belongs to the GST superfamily.

Glutathione S-transferase-like protein; part of the gene cluster that mediates the biosynthesis of the mycotoxin lucilactaene and the lucilactaene-related compound NG-391 that act as cell cycle inhibitors with potent growth inhibitory activity against malarial parasites, moderate growth inhibitory activity against cancer cells, and no activity against bacteria and fungi. Within the cluster, LUC7 and LUC8 encode proteins which are not commonly involved in the biosynthesis of secondary metabolites and are not essential for lucilactaene biosynthesis. This is Glutathione S-transferase-like protein LUC7 from Fusarium sp.